A 119-amino-acid chain; its full sequence is Large ribosomal subunit protein uL18 (119 aa).

The protein belongs to the universal ribosomal protein uL18 family. As to quaternary structure, part of the 50S ribosomal subunit; part of the 5S rRNA/L5/L18/L25 subcomplex. Contacts the 5S and 23S rRNAs.

Functionally, this is one of the proteins that bind and probably mediate the attachment of the 5S RNA into the large ribosomal subunit, where it forms part of the central protuberance. The chain is Large ribosomal subunit protein uL18 from Xylella fastidiosa (strain 9a5c).